The chain runs to 1047 residues: Helicase-like transcription factor CHR27 (1047 aa).

Positions 1–11 are enriched in low complexity; sequence MDSAIEISSGS. 3 disordered regions span residues 1-89, 103-130, and 145-174; these read MDSA…SGSG, RTLPPSFNSPPLPARSGTNNISNASGSR, and KRTLPPSFNPPPLPSRSGTNNIRNAGGSRF. 2 stretches are compositionally biased toward polar residues: residues 52–88 and 118–128; these read TNQAPPNGASSDTSRPGVSKPFTGNGNTVNSRISSGS and SGTNNISNASG. In terms of domain architecture, Helicase ATP-binding spans 296-597; the sequence is ETSSFNCPGG…YSYFRFLRYD (302 aa). 309 to 316 contacts ATP; it reads DDQGLGKT. 2 disordered regions span residues 349–407 and 511–533; these read ADDE…TRAF and VGASKKSKRRGRKSTNDTSSEPD. Residues 354–368 show a composition bias toward basic and acidic residues; the sequence is DNAKHESGSHVKPEL. The segment covering 370–379 has biased composition (polar residues); sequence VSSNSETSVL. A compositionally biased stretch (acidic residues) spans 385–400; it reads DENDSSDMEKAEDEEA. Residues 511-523 are compositionally biased toward basic residues; that stretch reads VGASKKSKRRGRK. An RING-type; degenerate zinc finger spans residues 751–790; the sequence is CYECNEPPEKPVVTLCGHIFCYECVLEYITGDENTCPVPR. Residues 851 to 868 show a composition bias toward polar residues; sequence QPDSPNSAQHGQMPSSSR. The tract at residues 851 to 873 is disordered; that stretch reads QPDSPNSAQHGQMPSSSRPYDDD. One can recognise a Helicase C-terminal domain in the interval 887–1042; it reads SPSQGAVKTI…ATRLTVDDLK (156 aa).

This sequence belongs to the SNF2/RAD54 helicase family. RAD16 subfamily. In terms of assembly, interacts with SUVR2. Interacts with itself.

Its subcellular location is the nucleus. Probable helicase-like transcription factor involved in transcriptional gene silencing. Associates with SUVR2 and contributes to transcriptional gene silencing at RNA-directed DNA methylation (RdDM) target loci but also at RdDM-independent target loci. May be involved in nucleosome positioning to form ordered nucleosome arrays on chromatin. Associates with SUVR2 and functions redundantly with FRG2. Required for the efficient methylation of a broad range of RdDM target loci. The protein is Helicase-like transcription factor CHR27 of Arabidopsis thaliana (Mouse-ear cress).